Consider the following 336-residue polypeptide: Inositol 2-dehydrogenase (336 aa).

The protein belongs to the Gfo/Idh/MocA family. Homotetramer.

It carries out the reaction myo-inositol + NAD(+) = scyllo-inosose + NADH + H(+). Functionally, involved in the oxidation of myo-inositol (MI) to 2-keto-myo-inositol (2KMI or 2-inosose). The polypeptide is Inositol 2-dehydrogenase (Salmonella agona (strain SL483)).